A 551-amino-acid polypeptide reads, in one-letter code: DNA double-strand break repair helicase HerA (551 aa).

Residues Arg152, Gly161–Asn166, and Arg507–Ile508 contribute to the ATP site.

It belongs to the HerA family. Homohexamer. Interacts with NurA.

It catalyses the reaction Couples ATP hydrolysis with the unwinding of duplex DNA at the replication fork by translocating in the 5'-3' direction. This creates two antiparallel DNA single strands (ssDNA). The leading ssDNA polymer is the template for DNA polymerase III holoenzyme which synthesizes a continuous strand.. It carries out the reaction ATP + H2O = ADP + phosphate + H(+). The enzyme catalyses Couples ATP hydrolysis with the unwinding of duplex DNA by translocating in the 3'-5' direction.. Its activity is regulated as follows. Helicase activity is stimulated in the presence of NurA. Functionally, involved in DNA double-strand break (DSB) repair. Probably acts with NurA to stimulate resection of the 5' strand and produce the long 3' single-strand that is required for RadA loading. Has DNA-dependent ATPase activity and DNA helicase activity. This chain is DNA double-strand break repair helicase HerA, found in Pyrococcus furiosus (strain ATCC 43587 / DSM 3638 / JCM 8422 / Vc1).